The sequence spans 191 residues: MAIPANFLRACHVCPLKKPAGCCKEQTMNIVDQQTFRDAMSCMGAAVNIITTDGPAGRAGFTASAVCSVTDTPPTLLVCLNRGASVWPVFNENRTLCVNTLSAGQEPLSNLFGGKTPMELRFAAARWQTGVTGCPQLEEALVSFDCRISQVVSVGTHDILFCAIEAIHRHATPYGLVWFDRSYHALMRPAC.

Belongs to the non-flavoprotein flavin reductase family. RutF subfamily.

It catalyses the reaction FMNH2 + NAD(+) = FMN + NADH + 2 H(+). In terms of biological role, catalyzes the reduction of FMN to FMNH2 which is used to reduce pyrimidine by RutA via the Rut pathway. The polypeptide is FMN reductase (NADH) RutF (Escherichia coli O1:K1 / APEC).